The sequence spans 1377 residues: DNA-directed RNA polymerase subunit beta' (1377 aa).

Residues C60, C62, C75, and C78 each coordinate Zn(2+). The Mg(2+) site is built by D449, D451, and D453. Zn(2+) contacts are provided by C777, C851, C858, and C861.

It belongs to the RNA polymerase beta' chain family. In terms of assembly, the RNAP catalytic core consists of 2 alpha, 1 beta, 1 beta' and 1 omega subunit. When a sigma factor is associated with the core the holoenzyme is formed, which can initiate transcription. Requires Mg(2+) as cofactor. Zn(2+) is required as a cofactor.

It carries out the reaction RNA(n) + a ribonucleoside 5'-triphosphate = RNA(n+1) + diphosphate. Functionally, DNA-dependent RNA polymerase catalyzes the transcription of DNA into RNA using the four ribonucleoside triphosphates as substrates. This Borreliella afzelii (strain PKo) (Borrelia afzelii) protein is DNA-directed RNA polymerase subunit beta'.